A 469-amino-acid chain; its full sequence is RuvB-like helicase 2 (469 aa).

Residue 76-83 (GPPSTGKT) coordinates ATP.

This sequence belongs to the RuvB family. May form heterododecamers with RVB1. Component of the SWR1 chromatin remodeling complex, the INO80 chromatin remodeling complex, and of the R2TP complex.

Its subcellular location is the nucleus. The catalysed reaction is ATP + H2O = ADP + phosphate + H(+). Functionally, DNA helicase which participates in several chromatin remodeling complexes, including the SWR1 and the INO80 complexes. The SWR1 complex mediates the ATP-dependent exchange of histone H2A for the H2A variant HZT1 leading to transcriptional regulation of selected genes by chromatin remodeling. The INO80 complex remodels chromatin by shifting nucleosomes and is involved in DNA repair. Also involved in pre-rRNA processing. This is RuvB-like helicase 2 (rvb2) from Aspergillus fumigatus (strain ATCC MYA-4609 / CBS 101355 / FGSC A1100 / Af293) (Neosartorya fumigata).